The sequence spans 198 residues: Probable GTP-binding protein EngB (198 aa).

Positions 21–195 (NFSEVAFLGR…EDIIINQTLG (175 aa)) constitute an EngB-type G domain. GTP is bound by residues 29-36 (GRSNVGKS), 56-60 (GKTQL), 81-84 (DLPG), 151-154 (TKCD), and 174-176 (VSN). Positions 36 and 58 each coordinate Mg(2+).

This sequence belongs to the TRAFAC class TrmE-Era-EngA-EngB-Septin-like GTPase superfamily. EngB GTPase family. Requires Mg(2+) as cofactor.

Functionally, necessary for normal cell division and for the maintenance of normal septation. This chain is Probable GTP-binding protein EngB, found in Campylobacter jejuni subsp. jejuni serotype O:23/36 (strain 81-176).